The primary structure comprises 159 residues: Serine-protein kinase RsbW (159 aa).

It belongs to the anti-sigma-factor family.

It catalyses the reaction L-seryl-[protein] + ATP = O-phospho-L-seryl-[protein] + ADP + H(+). The enzyme catalyses L-threonyl-[protein] + ATP = O-phospho-L-threonyl-[protein] + ADP + H(+). Its function is as follows. Negative regulator of sigma-B activity. Phosphorylates and inactivates its specific antagonist protein, RsbV. Upon phosphorylation of RsbV, RsbW is released and binds to sigma-B, thereby blocking its ability to form an RNA polymerase holoenzyme (E-sigma-B). The polypeptide is Serine-protein kinase RsbW (Staphylococcus epidermidis).